The chain runs to 21 residues: Cardiotoxin-like basic polypeptide ah (21 aa).

It belongs to the three-finger toxin family. Short-chain subfamily. Orphan group XV sub-subfamily. Contains 4 disulfide bonds. As to expression, expressed by the venom gland.

It localises to the secreted. The protein localises to the target cell membrane. Has hemolytic activity under low-lecithin conditions. Has low cytotoxic activity. Inhibits the expression of VEGF and bFGF in human non-small-cell lung cancer cell line NCI-H1299 in a dose-dependent manner. The protein is Cardiotoxin-like basic polypeptide ah of Naja atra (Chinese cobra).